Consider the following 269-residue polypeptide: Regulatory protein RecX (269 aa).

The protein belongs to the RecX family.

Its subcellular location is the cytoplasm. Functionally, modulates RecA activity. The chain is Regulatory protein RecX from Listeria monocytogenes serotype 4b (strain F2365).